A 443-amino-acid chain; its full sequence is DNA double-strand break repair protein Mre11 (443 aa).

Mn(2+)-binding residues include D8, H10, D49, and N84. H85 functions as the Proton donor in the catalytic mechanism. Residues H169, H201, and H203 each contribute to the Mn(2+) site. The interval 382 to 429 is disordered; that stretch reads QEEGAEERVVEEETEKKVEEQFKGDEEADEAERRAEETEKAKSTKKAR. The span at 395–423 shows a compositional bias: basic and acidic residues; sequence TEKKVEEQFKGDEEADEAERRAEETEKAK.

It belongs to the MRE11/RAD32 family. Homodimer. Forms a heterotetramer composed of two Mre11 subunits and two Rad50 subunits. It depends on Mn(2+) as a cofactor.

With respect to regulation, nuclease activity is regulated by Rad50. In terms of biological role, part of the Rad50/Mre11 complex, which is involved in the early steps of DNA double-strand break (DSB) repair. The complex may facilitate opening of the processed DNA ends to aid in the recruitment of HerA and NurA. Mre11 binds to DSB ends and has both double-stranded 3'-5' exonuclease activity and single-stranded endonuclease activity. The sequence is that of DNA double-strand break repair protein Mre11 from Archaeoglobus fulgidus (strain ATCC 49558 / DSM 4304 / JCM 9628 / NBRC 100126 / VC-16).